The primary structure comprises 91 residues: Large ribosomal subunit protein eL37B (91 aa).

Zn(2+)-binding residues include C19, C22, C34, and C37. The C4-type zinc finger occupies 19–37; sequence CRRCGKRSFHIQKSTCACC.

Belongs to the eukaryotic ribosomal protein eL37 family. As to quaternary structure, component of the large ribosomal subunit (LSU). Mature yeast ribosomes consist of a small (40S) and a large (60S) subunit. The 40S small subunit contains 1 molecule of ribosomal RNA (18S rRNA) and at least 33 different proteins. The large 60S subunit contains 3 rRNA molecules (25S, 5.8S and 5S rRNA) and at least 46 different proteins. It depends on Zn(2+) as a cofactor.

Its subcellular location is the cytoplasm. Its function is as follows. Component of the ribosome, a large ribonucleoprotein complex responsible for the synthesis of proteins in the cell. The small ribosomal subunit (SSU) binds messenger RNAs (mRNAs) and translates the encoded message by selecting cognate aminoacyl-transfer RNA (tRNA) molecules. The large subunit (LSU) contains the ribosomal catalytic site termed the peptidyl transferase center (PTC), which catalyzes the formation of peptide bonds, thereby polymerizing the amino acids delivered by tRNAs into a polypeptide chain. The nascent polypeptides leave the ribosome through a tunnel in the LSU and interact with protein factors that function in enzymatic processing, targeting, and the membrane insertion of nascent chains at the exit of the ribosomal tunnel. The chain is Large ribosomal subunit protein eL37B (rpl3702) from Schizosaccharomyces pombe (strain 972 / ATCC 24843) (Fission yeast).